The following is a 379-amino-acid chain: Lipid-A-disaccharide synthase (379 aa).

It belongs to the LpxB family.

The catalysed reaction is a lipid X + a UDP-2-N,3-O-bis[(3R)-3-hydroxyacyl]-alpha-D-glucosamine = a lipid A disaccharide + UDP + H(+). Its pathway is bacterial outer membrane biogenesis; LPS lipid A biosynthesis. Condensation of UDP-2,3-diacylglucosamine and 2,3-diacylglucosamine-1-phosphate to form lipid A disaccharide, a precursor of lipid A, a phosphorylated glycolipid that anchors the lipopolysaccharide to the outer membrane of the cell. The sequence is that of Lipid-A-disaccharide synthase from Idiomarina loihiensis (strain ATCC BAA-735 / DSM 15497 / L2-TR).